The chain runs to 296 residues: Aquaporin PIP1-6 (296 aa).

2 helical membrane-spanning segments follow: residues 63–83 and 98–120; these read IAEF…VMGV and IAWA…SGGH. The short motif at 122-124 is the NPA 1 element; sequence NPA. The next 3 membrane-spanning stretches (helical) occupy residues 141-161, 183-203, and 217-237; these read VYYV…VKAF, GDGL…VFSA, and ALAP…TIPI. Residues 243 to 245 carry the NPA 2 motif; the sequence is NPA. The chain crosses the membrane as a helical span at residues 265-285; it reads IFWVGPFAGAALAAVYHQVVL.

This sequence belongs to the MIP/aquaporin (TC 1.A.8) family. PIP (TC 1.A.8.11) subfamily.

Its subcellular location is the cell membrane. Its function is as follows. Aquaporins facilitate the transport of water and small neutral solutes across cell membranes. In Zea mays (Maize), this protein is Aquaporin PIP1-6 (PIP1-6).